A 406-amino-acid chain; its full sequence is Solute carrier family 22 member 18 (406 aa).

10 helical membrane-spanning segments follow: residues 8–28, 43–63, 85–105, 140–160, 168–188, 226–246, 258–278, 295–315, 316–336, and 374–394; these read GIII…FMQF, VSFG…GPVF, ALYL…FLLF, LGLC…TLNT, AILA…CVPA, FLVK…FSII, AGYL…LVIG, LVFA…HFCF, LMPG…SMLT, and GVPI…LVLW.

Belongs to the major facilitator (TC 2.A.1) superfamily. Organic cation transporter (TC 2.A.1.19) family. Interacts with RNF167. In terms of tissue distribution, expressed at high levels in fetal and adult kidney and liver, and extraembryonic membranes (yolk sac). Expressed at moderate levels in intestine, heart, lung and testis.

The protein localises to the apical cell membrane. Its function is as follows. May act as a transporter of organic cations based on a proton efflux antiport mechanism. May play a role in the transport of chloroquine and quinidine-related compounds in kidney. Plays a role in the regulation of lipid metabolism. This is Solute carrier family 22 member 18 (Slc67a1) from Mus musculus (Mouse).